The sequence spans 162 residues: UPF0114 protein PFLU_5318 (162 aa).

A run of 3 helical transmembrane segments spans residues 15-35 (LLAPIYFGLSLGLLALALKFF), 53-73 (LILVLLSLIDMALVGGLLVMV), and 136-156 (LMWYVIIHMTFVVSAFAMGYL).

This sequence belongs to the UPF0114 family.

Its subcellular location is the cell membrane. This Pseudomonas fluorescens (strain SBW25) protein is UPF0114 protein PFLU_5318.